Here is a 105-residue protein sequence, read N- to C-terminus: Putative pterin-4-alpha-carbinolamine dehydratase (105 aa).

The protein belongs to the pterin-4-alpha-carbinolamine dehydratase family.

It catalyses the reaction (4aS,6R)-4a-hydroxy-L-erythro-5,6,7,8-tetrahydrobiopterin = (6R)-L-erythro-6,7-dihydrobiopterin + H2O. The sequence is that of Putative pterin-4-alpha-carbinolamine dehydratase from Sinorhizobium fredii (strain NBRC 101917 / NGR234).